Reading from the N-terminus, the 471-residue chain is Alkaline phosphatase (471 aa).

The N-terminal stretch at 1 to 21 is a signal peptide; it reads MKQSTIALALLPLLFTPVTKA. Asp-73 provides a ligand contact to Mg(2+). Asp-73 contributes to the Zn(2+) binding site. The active-site Phosphoserine intermediate is Ser-124. The Mg(2+) site is built by Asp-175 and Thr-177. 2 disulfide bridges follow: Cys-190-Cys-200 and Cys-308-Cys-358. Glu-344 provides a ligand contact to Mg(2+). Zn(2+)-binding residues include Asp-349, His-353, Asp-391, His-392, and His-434.

The protein belongs to the alkaline phosphatase family. In terms of assembly, isozymes 1 and 3 are a dimer of identical chains, isozyme 2 is a dimer of heterogeneous chains, one of each of the subunits from isozymes 1 and 3. It depends on Mg(2+) as a cofactor. Zn(2+) serves as cofactor.

It localises to the periplasm. The catalysed reaction is a phosphate monoester + H2O = an alcohol + phosphate. In Escherichia coli (strain K12), this protein is Alkaline phosphatase (phoA).